We begin with the raw amino-acid sequence, 339 residues long: Glycerol-3-phosphate dehydrogenase [NAD(P)+] (339 aa).

NADPH-binding residues include S13, W14, and K108. Positions 108, 139, and 141 each coordinate sn-glycerol 3-phosphate. A143 contacts NADPH. K194, D247, S257, R258, and N259 together coordinate sn-glycerol 3-phosphate. K194 acts as the Proton acceptor in catalysis. Position 258 (R258) interacts with NADPH. Residues V282 and E284 each contribute to the NADPH site.

Belongs to the NAD-dependent glycerol-3-phosphate dehydrogenase family.

Its subcellular location is the cytoplasm. It catalyses the reaction sn-glycerol 3-phosphate + NAD(+) = dihydroxyacetone phosphate + NADH + H(+). It carries out the reaction sn-glycerol 3-phosphate + NADP(+) = dihydroxyacetone phosphate + NADPH + H(+). It functions in the pathway membrane lipid metabolism; glycerophospholipid metabolism. Its function is as follows. Catalyzes the reduction of the glycolytic intermediate dihydroxyacetone phosphate (DHAP) to sn-glycerol 3-phosphate (G3P), the key precursor for phospholipid synthesis. The polypeptide is Glycerol-3-phosphate dehydrogenase [NAD(P)+] (Streptococcus equi subsp. equi (strain 4047)).